A 305-amino-acid chain; its full sequence is UDP-3-O-acyl-N-acetylglucosamine deacetylase (305 aa).

Zn(2+) is bound by residues H79, H238, and D242. The active-site Proton donor is H265.

The protein belongs to the LpxC family. Requires Zn(2+) as cofactor.

It carries out the reaction a UDP-3-O-[(3R)-3-hydroxyacyl]-N-acetyl-alpha-D-glucosamine + H2O = a UDP-3-O-[(3R)-3-hydroxyacyl]-alpha-D-glucosamine + acetate. It functions in the pathway glycolipid biosynthesis; lipid IV(A) biosynthesis; lipid IV(A) from (3R)-3-hydroxytetradecanoyl-[acyl-carrier-protein] and UDP-N-acetyl-alpha-D-glucosamine: step 2/6. Functionally, catalyzes the hydrolysis of UDP-3-O-myristoyl-N-acetylglucosamine to form UDP-3-O-myristoylglucosamine and acetate, the committed step in lipid A biosynthesis. The polypeptide is UDP-3-O-acyl-N-acetylglucosamine deacetylase (Pectobacterium atrosepticum (strain SCRI 1043 / ATCC BAA-672) (Erwinia carotovora subsp. atroseptica)).